The primary structure comprises 57 residues: uncharacterized protein (57 aa).

Residues 4–26 traverse the membrane as a helical segment; the sequence is FMPIRVFLYSYVIINSLLSSFFH.

Its subcellular location is the membrane. This is an uncharacterized protein from Saccharomyces cerevisiae (strain ATCC 204508 / S288c) (Baker's yeast).